The following is a 41-amino-acid chain: Tachystatin-C (41 aa).

Cystine bridges form between C12–C28, C19–C33, and C27–C38.

In terms of tissue distribution, granular hemocytes, small secretory granules.

It is found in the secreted. Its function is as follows. Binds to chitin. Shows strong activity against E.coli (IC(50) is 1.2 ug/ml). Is also very active against S.aureus (IC(50) is 0.8 ug/ml), C.albicans (IC(50) is 0.9 ug/ml) and P.pastoris (IC(50) is 0.3 ug/ml). Binds to chitin (5.2 uM are required to obtain 50% of binding). Causes hemolysis on sheep erythrocytes, probably by forming ion-permeable pores. In Tachypleus tridentatus (Japanese horseshoe crab), this protein is Tachystatin-C.